A 342-amino-acid polypeptide reads, in one-letter code: S-adenosylmethionine:tRNA ribosyltransferase-isomerase (342 aa).

It belongs to the QueA family. As to quaternary structure, monomer.

The protein localises to the cytoplasm. It carries out the reaction 7-aminomethyl-7-carbaguanosine(34) in tRNA + S-adenosyl-L-methionine = epoxyqueuosine(34) in tRNA + adenine + L-methionine + 2 H(+). It participates in tRNA modification; tRNA-queuosine biosynthesis. Functionally, transfers and isomerizes the ribose moiety from AdoMet to the 7-aminomethyl group of 7-deazaguanine (preQ1-tRNA) to give epoxyqueuosine (oQ-tRNA). This Oceanobacillus iheyensis (strain DSM 14371 / CIP 107618 / JCM 11309 / KCTC 3954 / HTE831) protein is S-adenosylmethionine:tRNA ribosyltransferase-isomerase.